We begin with the raw amino-acid sequence, 375 residues long: 2-isopropylmalate synthase (375 aa).

The region spanning 1–124 (GRTSIDNLCR…FTNIKHNELY (124 aa)) is the Pyruvate carboxyltransferase domain. Mn(2+) contacts are provided by His-59, His-61, and Asn-95. The regulatory domain stretch occupies residues 250–375 (QLKYFSIHSG…SKIKNIKNKK (126 aa)).

It belongs to the alpha-IPM synthase/homocitrate synthase family. LeuA type 1 subfamily. In terms of assembly, homodimer.

It localises to the cytoplasm. It carries out the reaction 3-methyl-2-oxobutanoate + acetyl-CoA + H2O = (2S)-2-isopropylmalate + CoA + H(+). Its pathway is amino-acid biosynthesis; L-leucine biosynthesis; L-leucine from 3-methyl-2-oxobutanoate: step 1/4. Its function is as follows. Catalyzes the condensation of the acetyl group of acetyl-CoA with 3-methyl-2-oxobutanoate (2-ketoisovalerate) to form 3-carboxy-3-hydroxy-4-methylpentanoate (2-isopropylmalate). The protein is 2-isopropylmalate synthase of Buchnera aphidicola subsp. Thelaxes suberi.